The following is a 350-amino-acid chain: L-serine dehydratase (350 aa).

K62 is subject to N6-(pyridoxal phosphate)lysine.

It belongs to the serine/threonine dehydratase family. It depends on pyridoxal 5'-phosphate as a cofactor.

It is found in the cytoplasm. The catalysed reaction is L-serine = pyruvate + NH4(+). The protein operates within carbohydrate biosynthesis; gluconeogenesis. In Dictyostelium discoideum (Social amoeba), this protein is L-serine dehydratase (sds).